We begin with the raw amino-acid sequence, 139 residues long: Large ribosomal subunit protein uL13c (139 aa).

It belongs to the universal ribosomal protein uL13 family. Part of the 50S ribosomal subunit.

It is found in the plastid. The protein resides in the chloroplast. The sequence is that of Large ribosomal subunit protein uL13c from Trieres chinensis (Marine centric diatom).